Here is a 278-residue protein sequence, read N- to C-terminus: Energy-coupling factor transporter ATP-binding protein EcfA (278 aa).

The ABC transporter domain maps to 4-239 (LETRDLKYSY…SETVRSANLR (236 aa)). 37-44 (GPNGAGKS) contacts ATP.

It belongs to the ABC transporter superfamily. Energy-coupling factor EcfA family. In terms of assembly, forms a stable energy-coupling factor (ECF) transporter complex composed of 2 membrane-embedded substrate-binding proteins (S component), 2 ATP-binding proteins (A component) and 2 transmembrane proteins (T component).

Its subcellular location is the cell membrane. ATP-binding (A) component of a common energy-coupling factor (ECF) ABC-transporter complex. Unlike classic ABC transporters this ECF transporter provides the energy necessary to transport a number of different substrates. In Methanococcus maripaludis (strain DSM 14266 / JCM 13030 / NBRC 101832 / S2 / LL), this protein is Energy-coupling factor transporter ATP-binding protein EcfA.